Reading from the N-terminus, the 361-residue chain is Chorismate synthase (361 aa).

An NADP(+)-binding site is contributed by Arg47. Residues 124–126, Gly286, 301–305, and Arg327 each bind FMN; these read RAS and KPTAT.

It belongs to the chorismate synthase family. In terms of assembly, homotetramer. FMNH2 is required as a cofactor.

The catalysed reaction is 5-O-(1-carboxyvinyl)-3-phosphoshikimate = chorismate + phosphate. Its pathway is metabolic intermediate biosynthesis; chorismate biosynthesis; chorismate from D-erythrose 4-phosphate and phosphoenolpyruvate: step 7/7. Catalyzes the anti-1,4-elimination of the C-3 phosphate and the C-6 proR hydrogen from 5-enolpyruvylshikimate-3-phosphate (EPSP) to yield chorismate, which is the branch point compound that serves as the starting substrate for the three terminal pathways of aromatic amino acid biosynthesis. This reaction introduces a second double bond into the aromatic ring system. This chain is Chorismate synthase, found in Prochlorococcus marinus (strain NATL2A).